Consider the following 316-residue polypeptide: Polyprenyl transferase dpchC (316 aa).

Transmembrane regions (helical) follow at residues 24-44, 60-80, 105-125, 154-174, 192-212, 234-254, 258-278, and 296-316; these read PLFTTFAGLWSTLLAGGAKMA, ALCFVASYLFCGAGMVWNDWI, EAMVWMVLQAALSWGVLEVML, MLGIYPQYILAFTIAWPAVIG, CLPLCTMVFFWTIYLNTAYSY, IHLLLVALVSPILVCLPIYLF, SLWLWLSWMGVWTASLAQQLV, and FILGIWTILACVVQVFLTGSA.

Belongs to the UbiA prenyltransferase family. It depends on Mg(2+) as a cofactor.

It localises to the membrane. The protein operates within secondary metabolite biosynthesis; terpenoid biosynthesis. In terms of biological role, polyprenyl transferase; part of the gene cluster that mediates the biosynthesis of the diterpenoid pyrones higginsianins A and B. The first step of the pathway is the synthesis of the alpha-pyrone moiety by the polyketide synthase dpchA via condensation of one acetyl-CoA starter unit with 3 malonyl-CoA units and 2 methylations. The alpha-pyrone is then combined with geranylgeranyl pyrophosphate (GGPP) formed by the GGPP synthase dpchD through the action of the prenyltransferase dpchC to yield a linear alpha-pyrone diterpenoid. Subsequent steps in the diterpenoid pyrone biosynthetic pathway involve the decalin core formation, which is initiated by the epoxidation of the C10-C11 olefin by the FAD-dependent oxidoreductase dpchE, and is followed by a cyclization cascade catalyzed by the terpene cyclase dpchB. The short chain dehydrogenase/reductase dpchG then oxidizes the 8S hydroxy group to a ketone and the short chain dehydrogenase/reductase dpchH reduces the ketone to the 8R hydroxy group to yield higginsianin B. Finally, the FAD-dependent oxidoreductase dpchF converts higginsianin B into higginsianin A. The sequence is that of Polyprenyl transferase dpchC from Colletotrichum higginsianum (strain IMI 349063) (Crucifer anthracnose fungus).